The following is a 214-amino-acid chain: Ras-related protein Rab2BV (214 aa).

Residue Gly19–Ser26 participates in GTP binding. Positions Ser41–Phe49 match the Effector region motif. GTP-binding positions include Asp67–Gln71 and Asn125–Asp128. S-geranylgeranyl cysteine attachment occurs at residues Cys211 and Cys212.

Belongs to the small GTPase superfamily. Rab family.

Its subcellular location is the cell membrane. In Beta vulgaris (Sugar beet), this protein is Ras-related protein Rab2BV (RAB2BV).